We begin with the raw amino-acid sequence, 445 residues long: Tubulin alpha-1 chain (445 aa).

Glutamine 11 contributes to the GTP binding site. Lysine 40 carries the post-translational modification N6-acetyllysine. GTP-binding residues include glutamate 71, serine 140, glycine 144, threonine 145, threonine 179, asparagine 206, and asparagine 228. Residue glutamate 71 participates in Mg(2+) binding. Glutamate 254 is an active-site residue.

Belongs to the tubulin family. In terms of assembly, dimer of alpha and beta chains. A typical microtubule is a hollow water-filled tube with an outer diameter of 25 nm and an inner diameter of 15 nM. Alpha-beta heterodimers associate head-to-tail to form protofilaments running lengthwise along the microtubule wall with the beta-tubulin subunit facing the microtubule plus end conferring a structural polarity. Microtubules usually have 13 protofilaments but different protofilament numbers can be found in some organisms and specialized cells. Requires Mg(2+) as cofactor. Acetylation of alpha chains at Lys-40 stabilizes microtubules and affects affinity and processivity of microtubule motors. This modification has a role in multiple cellular functions, ranging from cell motility, cell cycle progression or cell differentiation to intracellular trafficking and signaling.

The protein localises to the cytoplasm. The protein resides in the cytoskeleton. The catalysed reaction is GTP + H2O = GDP + phosphate + H(+). In terms of biological role, tubulin is the major constituent of microtubules, a cylinder consisting of laterally associated linear protofilaments composed of alpha- and beta-tubulin heterodimers. Microtubules grow by the addition of GTP-tubulin dimers to the microtubule end, where a stabilizing cap forms. Below the cap, tubulin dimers are in GDP-bound state, owing to GTPase activity of alpha-tubulin. The sequence is that of Tubulin alpha-1 chain from Stylonychia lemnae (Ciliate).